Reading from the N-terminus, the 209-residue chain is PF03932 family protein CutC (209 aa).

It localises to the cytoplasm. The protein is PF03932 family protein CutC of Streptococcus pyogenes serotype M6 (strain ATCC BAA-946 / MGAS10394).